We begin with the raw amino-acid sequence, 331 residues long: Centriolar satellite-associated tubulin polyglutamylase complex regulator 1 (331 aa).

The required for interaction with PCM1 stretch occupies residues 1–111 (MLSPERLALP…HCLLQLLCPD (111 aa)). Residues 1 to 225 (MLSPERLALP…SCPPPALVKE (225 aa)) form a required for interaction with TPGS1, LRRC49, and TTLL1 region. The required for interaction with TPGS2 stretch occupies residues 112-331 (FPLELTQKAA…STEETDESET (220 aa)). Positions 292 to 331 (SCLPSRTPPRVGSPWKPLHRSRKLDAESDGSTEETDESET) are disordered. Residues 318-331 (ESDGSTEETDESET) show a composition bias toward acidic residues. Phosphoserine is present on S319.

The protein belongs to the CSTPP1 family. Interacts with PCM1. Interacts with TTLL1, TPGS1, TPGS2 and LRRC49; the interactions link CSTPP1 to the complex TPGC. Binds to alpha-tubulin.

Its subcellular location is the cytoplasm. The protein resides in the cytoskeleton. It is found in the microtubule organizing center. It localises to the centrosome. The protein localises to the centriolar satellite. Regulator of the tubulin polyglutamylase complex (TPGC) that controls cytoskeletal organization, nuclear shape, and cilium disassembly by balancing microtubule and actin assembly. Regulates the assembly and stability of the TPGC and thereby modulates polyglutamylation of the microtubule, which antagonizes MAP4 binding. The polypeptide is Centriolar satellite-associated tubulin polyglutamylase complex regulator 1 (Mus musculus (Mouse)).